A 203-amino-acid polypeptide reads, in one-letter code: UPF0301 protein Sde_3637 (203 aa).

The protein belongs to the UPF0301 (AlgH) family.

In Saccharophagus degradans (strain 2-40 / ATCC 43961 / DSM 17024), this protein is UPF0301 protein Sde_3637.